Consider the following 267-residue polypeptide: Alpha-tubulin N-acetyltransferase (267 aa).

An N-acetyltransferase domain is found at 1-197; it reads MDFRAGLENV…NNFVVYSEFF (197 aa). Acetyl-CoA contacts are provided by residues 131-144 and 167-176; these read FYIH…GYGK and SMKMIQFLHK.

Belongs to the acetyltransferase ATAT1 family.

It catalyses the reaction L-lysyl-[alpha-tubulin] + acetyl-CoA = N(6)-acetyl-L-lysyl-[alpha-tubulin] + CoA + H(+). Functionally, specifically acetylates 'Lys-40' in alpha-tubulin on the lumenal side of microtubules. Promotes microtubule destabilization and accelerates microtubule dynamics; this activity may be independent of acetylation activity. Acetylates alpha-tubulin with a slow enzymatic rate, due to a catalytic site that is not optimized for acetyl transfer. Enters the microtubule through each end and diffuses quickly throughout the lumen of microtubules. Acetylates only long/old microtubules because of its slow acetylation rate since it does not have time to act on dynamically unstable microtubules before the enzyme is released. The chain is Alpha-tubulin N-acetyltransferase from Schistosoma japonicum (Blood fluke).